Reading from the N-terminus, the 105-residue chain is Meiotically up-regulated gene 52 protein (105 aa).

Functionally, has a role in meiosis. The chain is Meiotically up-regulated gene 52 protein (mug52) from Schizosaccharomyces pombe (strain 972 / ATCC 24843) (Fission yeast).